The sequence spans 142 residues: Small ribosomal subunit protein uS19 (142 aa).

Position 2 is an N-acetylserine (serine 2). Residues lysine 24, lysine 35, and lysine 64 each participate in a glycyl lysine isopeptide (Lys-Gly) (interchain with G-Cter in ubiquitin) cross-link.

The protein belongs to the universal ribosomal protein uS19 family. As to quaternary structure, component of the small ribosomal subunit (SSU). Mature yeast ribosomes consist of a small (40S) and a large (60S) subunit. The 40S small subunit contains 1 molecule of ribosomal RNA (18S rRNA) and 33 different proteins (encoded by 57 genes). The large 60S subunit contains 3 rRNA molecules (25S, 5.8S and 5S rRNA) and 46 different proteins (encoded by 81 genes).

It localises to the cytoplasm. Its function is as follows. Component of the ribosome, a large ribonucleoprotein complex responsible for the synthesis of proteins in the cell. The small ribosomal subunit (SSU) binds messenger RNAs (mRNAs) and translates the encoded message by selecting cognate aminoacyl-transfer RNA (tRNA) molecules. The large subunit (LSU) contains the ribosomal catalytic site termed the peptidyl transferase center (PTC), which catalyzes the formation of peptide bonds, thereby polymerizing the amino acids delivered by tRNAs into a polypeptide chain. The nascent polypeptides leave the ribosome through a tunnel in the LSU and interact with protein factors that function in enzymatic processing, targeting, and the membrane insertion of nascent chains at the exit of the ribosomal tunnel. uS19 is involved in the nuclear export of the small ribosomal subunit precursor. Has a role in the late stage of the assembly of pre-40S particles within the nucleus and controls their export to the cytoplasm. In Saccharomyces cerevisiae (strain ATCC 204508 / S288c) (Baker's yeast), this protein is Small ribosomal subunit protein uS19.